Consider the following 166-residue polypeptide: Sec-independent protein translocase protein TatB (166 aa).

A helical transmembrane segment spans residues 2–22 (FNDIGALELLTLGVLAVLVFG). A disordered region spans residues 110–166 (TPAASDTANSAVNGSAGAAADGVTTSLTKTGETTPDLLKKAPQQAQPERPPFDADAT). The span at 117-129 (ANSAVNGSAGAAA) shows a compositional bias: low complexity. The segment covering 132–142 (VTTSLTKTGET) has biased composition (polar residues).

This sequence belongs to the TatB family. As to quaternary structure, the Tat system comprises two distinct complexes: a TatABC complex, containing multiple copies of TatA, TatB and TatC subunits, and a separate TatA complex, containing only TatA subunits. Substrates initially bind to the TatABC complex, which probably triggers association of the separate TatA complex to form the active translocon.

Its subcellular location is the cell membrane. In terms of biological role, part of the twin-arginine translocation (Tat) system that transports large folded proteins containing a characteristic twin-arginine motif in their signal peptide across membranes. Together with TatC, TatB is part of a receptor directly interacting with Tat signal peptides. TatB may form an oligomeric binding site that transiently accommodates folded Tat precursor proteins before their translocation. The protein is Sec-independent protein translocase protein TatB of Streptomyces griseus subsp. griseus (strain JCM 4626 / CBS 651.72 / NBRC 13350 / KCC S-0626 / ISP 5235).